The primary structure comprises 146 residues: Large ribosomal subunit protein bL9 (146 aa).

Belongs to the bacterial ribosomal protein bL9 family.

In terms of biological role, binds to the 23S rRNA. The protein is Large ribosomal subunit protein bL9 of Symbiobacterium thermophilum (strain DSM 24528 / JCM 14929 / IAM 14863 / T).